The sequence spans 88 residues: MANSAQARKRARQAVAQNAHNSSLRSRLRTAVKAVRKAIDAGDKAAAAEIFKNSQATIDSIADKKIVHKNKAARHKSRLSAAIKAMAA.

Residues 1 to 25 (MANSAQARKRARQAVAQNAHNSSLR) are disordered.

The protein belongs to the bacterial ribosomal protein bS20 family.

In terms of biological role, binds directly to 16S ribosomal RNA. In Cupriavidus pinatubonensis (strain JMP 134 / LMG 1197) (Cupriavidus necator (strain JMP 134)), this protein is Small ribosomal subunit protein bS20.